The following is a 225-amino-acid chain: Riboflavin kinase (225 aa).

A unknown region spans residues 1 to 89; it reads MPDIEYLKKL…SRIFSSEPDT (89 aa). The riboflavin kinase stretch occupies residues 90–225; the sequence is LELEGNVLKG…LKKQGMEGQK (136 aa). 99–104 provides a ligand contact to CDP; the sequence is GLGEGQ. Mg(2+) is bound by residues T128 and N130. Positions 185 and 193 each coordinate FMN. 198 to 201 is a CDP binding site; it reads VKLR.

The protein belongs to the archaeal riboflavin kinase family. Requires Mg(2+) as cofactor.

The catalysed reaction is riboflavin + CTP = CDP + FMN + H(+). It functions in the pathway cofactor biosynthesis; FMN biosynthesis; FMN from riboflavin (CTP route): step 1/1. Its function is as follows. Catalyzes the CTP-dependent phosphorylation of riboflavin (vitamin B2) to form flavin mononucleotide (FMN). This chain is Riboflavin kinase (ribK), found in Methanosarcina mazei (strain ATCC BAA-159 / DSM 3647 / Goe1 / Go1 / JCM 11833 / OCM 88) (Methanosarcina frisia).